A 333-amino-acid chain; its full sequence is Lipoyl synthase (333 aa).

The disordered stretch occupies residues 1 to 29 (MTDSASGASAVANIATPSNEPYDATRKQK). [4Fe-4S] cluster is bound by residues Cys80, Cys85, Cys91, Cys106, Cys110, Cys113, and Ser320. The region spanning 91–309 (CFGKGTATFM…EEKAYEMGFT (219 aa)) is the Radical SAM core domain.

This sequence belongs to the radical SAM superfamily. Lipoyl synthase family. [4Fe-4S] cluster serves as cofactor.

Its subcellular location is the cytoplasm. The catalysed reaction is [[Fe-S] cluster scaffold protein carrying a second [4Fe-4S](2+) cluster] + N(6)-octanoyl-L-lysyl-[protein] + 2 oxidized [2Fe-2S]-[ferredoxin] + 2 S-adenosyl-L-methionine + 4 H(+) = [[Fe-S] cluster scaffold protein] + N(6)-[(R)-dihydrolipoyl]-L-lysyl-[protein] + 4 Fe(3+) + 2 hydrogen sulfide + 2 5'-deoxyadenosine + 2 L-methionine + 2 reduced [2Fe-2S]-[ferredoxin]. It participates in protein modification; protein lipoylation via endogenous pathway; protein N(6)-(lipoyl)lysine from octanoyl-[acyl-carrier-protein]: step 2/2. Its function is as follows. Catalyzes the radical-mediated insertion of two sulfur atoms into the C-6 and C-8 positions of the octanoyl moiety bound to the lipoyl domains of lipoate-dependent enzymes, thereby converting the octanoylated domains into lipoylated derivatives. This Ralstonia nicotianae (strain ATCC BAA-1114 / GMI1000) (Ralstonia solanacearum) protein is Lipoyl synthase.